The primary structure comprises 68 residues: MAAMKTADIRAMTPDQMDDAITSLKKERFNLRFQRATGQLENTSRMREARRDIARIKTIAAQKRDAKK.

The protein belongs to the universal ribosomal protein uL29 family.

The protein is Large ribosomal subunit protein uL29 of Nitrobacter winogradskyi (strain ATCC 25391 / DSM 10237 / CIP 104748 / NCIMB 11846 / Nb-255).